The chain runs to 792 residues: 5-methyltetrahydropteroyltriglutamate--homocysteine methyltransferase (792 aa).

5-methyltetrahydropteroyltri-L-glutamate contacts are provided by residues 16–19 (RELK) and Lys-112. Residues 432 to 434 (IGS) and Glu-485 each bind L-homocysteine. L-methionine-binding positions include 432–434 (IGS) and Glu-485. Residues 516-517 (RC) and Trp-562 each bind 5-methyltetrahydropteroyltri-L-glutamate. Asp-600 serves as a coordination point for L-homocysteine. Asp-600 serves as a coordination point for L-methionine. Residue Glu-606 coordinates 5-methyltetrahydropteroyltri-L-glutamate. Zn(2+) is bound by residues His-642, Cys-644, and Glu-666. Residue His-695 is the Proton donor of the active site. Residue Cys-727 coordinates Zn(2+).

This sequence belongs to the vitamin-B12 independent methionine synthase family. It depends on Zn(2+) as a cofactor.

It catalyses the reaction 5-methyltetrahydropteroyltri-L-glutamate + L-homocysteine = tetrahydropteroyltri-L-glutamate + L-methionine. It functions in the pathway amino-acid biosynthesis; L-methionine biosynthesis via de novo pathway; L-methionine from L-homocysteine (MetE route): step 1/1. Its function is as follows. Catalyzes the transfer of a methyl group from 5-methyltetrahydrofolate to homocysteine resulting in methionine formation. The polypeptide is 5-methyltetrahydropteroyltriglutamate--homocysteine methyltransferase (Cupriavidus necator (strain ATCC 17699 / DSM 428 / KCTC 22496 / NCIMB 10442 / H16 / Stanier 337) (Ralstonia eutropha)).